A 207-amino-acid polypeptide reads, in one-letter code: Small ribosomal subunit protein uS4 (207 aa).

The 61-residue stretch at 96-156 (SRLDNTVYRM…KKSHKQSRIR (61 aa)) folds into the S4 RNA-binding domain.

It belongs to the universal ribosomal protein uS4 family. In terms of assembly, part of the 30S ribosomal subunit. Contacts protein S5. The interaction surface between S4 and S5 is involved in control of translational fidelity.

Functionally, one of the primary rRNA binding proteins, it binds directly to 16S rRNA where it nucleates assembly of the body of the 30S subunit. Its function is as follows. With S5 and S12 plays an important role in translational accuracy. The polypeptide is Small ribosomal subunit protein uS4 (Blochmanniella pennsylvanica (strain BPEN)).